The sequence spans 463 residues: Proton-coupled folate transporter (463 aa).

The Cytoplasmic segment spans residues 1–27 (MVSPDDSPEIRDRPRPRRCLLPASVTV). Residues 28 to 46 (EPVIFLSMFALALQGPLAT) form a helical membrane-spanning segment. Over 47–86 (QYLWDRLSADIGFNGTRTVGCAMNGSKSAGPEQQEVETLT) the chain is Extracellular. Residues Asn60 and Asn70 are each glycosylated (N-linked (GlcNAc...) asparagine). A disulfide bond links Cys67 and Cys302. The helical transmembrane segment at 87–112 (AHWSLYINLGGFLVGLFSVMLLGPWS) threads the bilayer. At 113 to 116 (DKVG) the chain is on the cytoplasmic side. The chain crosses the membrane as a helical span at residues 117 to 139 (RRPVLMLPCIGLALQAAVYLLVM). The Extracellular segment spans residues 140 to 144 (YQELH). Residues 145 to 158 (VGYFLIGRFISGIS) traverse the membrane as a helical segment. Topologically, residues 159–181 (GDFNMILAGCFAYIADVSDRQSR) are cytoplasmic. Residues Asp160 and Glu189 each coordinate H(+). Residues 182–207 (TFRVAVLEACLGIAGMVASIIGGHWR) form a helical membrane-spanning segment. The Extracellular portion of the chain corresponds to 208–212 (KAQGY). The helical transmembrane segment at 213-231 (INPFWLVFAVNLFTALYVY) threads the bilayer. Over 232–270 (FCVEESVKDKKPARLFTHRHYQSFFRLFTVQGENNRRRK) the chain is Cytoplasmic. Residues 271–293 (LFLYSLALLVVVTVHMGAKNLFV) traverse the membrane as a helical segment. His285 provides a ligand contact to H(+). Residues 294-306 (LYELSYPLCWDSD) are Extracellular-facing. The chain crosses the membrane as a helical span at residues 307–329 (LIGYGSAAEHLTYLSSLAGLRLF). Residues 330–335 (QLCLAD) are Cytoplasmic-facing. A helical membrane pass occupies residues 336 to 355 (SWVAEMGFISNISGLVVISL). The Extracellular segment spans residues 356–359 (ASTT). The helical transmembrane segment at 360–380 (PIMFTGYGLRFFAMATTPVIR) threads the bilayer. Over 381-392 (SKLSKMVEEGEQ) the chain is Cytoplasmic. The chain crosses the membrane as a helical span at residues 393–418 (GALFSSVACVEGLSFLLATGLFNSLY). The Extracellular segment spans residues 419–426 (PATLHFMK). A helical membrane pass occupies residues 427–445 (GFPFLLGALLLLIPAGIIG). Residues 446 to 463 (LIEVCEQKPMYSQFSEIS) lie on the Cytoplasmic side of the membrane.

The protein belongs to the major facilitator superfamily. SLC46A family. In terms of assembly, monomer.

The protein localises to the cell membrane. It is found in the apical cell membrane. Its subcellular location is the basolateral cell membrane. It localises to the endosome membrane. The protein resides in the cytoplasm. It carries out the reaction folate(in) + H(+)(in) = folate(out) + H(+)(out). The catalysed reaction is (6S)-5-methyl-5,6,7,8-tetrahydrofolate(in) + H(+)(in) = (6S)-5-methyl-5,6,7,8-tetrahydrofolate(out) + H(+)(out). The enzyme catalyses methotrexate(in) + H(+)(in) = methotrexate(out) + H(+)(out). It catalyses the reaction pemetrexed(in) + H(+)(in) = pemetrexed(out) + H(+)(out). Its function is as follows. Proton-coupled folate symporter that mediates folate absorption using an H(+) gradient as a driving force. Involved in the intestinal absorption of folates at the brush-border membrane of the proximal jejunum, and the transport from blood to cerebrospinal fluid across the choroid plexus. Functions at acidic pH via alternate outward- and inward-open conformation states. Protonation of residues in the outward open state primes the protein for transport. Binding of folate promotes breaking of salt bridge network and subsequent closure of the extracellular gate, leading to the inward-open state and release of protons and folate. Also able to transport antifolate drugs, such as methotrexate and pemetrexed. Also acts as a lower-affinity, pH-independent heme carrier protein and constitutes the main importer of heme in the intestine. Imports heme in the retina and retinal pigment epithelium, in neurons of the hippocampus, in hepatocytes and in the renal epithelial cells. This is Proton-coupled folate transporter from Xenopus laevis (African clawed frog).